A 419-amino-acid chain; its full sequence is Mitochondrial chaperone BCS1 (419 aa).

At 1-15 (MPLSDFVLALKDNPY) the chain is on the mitochondrial intermembrane side. A helical membrane pass occupies residues 16-32 (FGAGFGLVGVGTALALA). The Mitochondrial matrix segment spans residues 33–419 (RKGAQLGLVA…AIQNAESLRR (387 aa)). Position 181 is a phosphotyrosine (tyrosine 181). Position 230 to 237 (230 to 237 (GPPGCGKS)) interacts with ATP.

Belongs to the AAA ATPase family. BCS1 subfamily. In terms of assembly, interacts with LETM1.

The protein resides in the mitochondrion inner membrane. The catalysed reaction is ATP + H2O = ADP + phosphate + H(+). Chaperone necessary for the incorporation of Rieske iron-sulfur protein UQCRFS1 into the mitochondrial respiratory chain complex III. Plays an important role in the maintenance of mitochondrial tubular networks, respiratory chain assembly and formation of the LETM1 complex. The polypeptide is Mitochondrial chaperone BCS1 (BCS1L) (Bos taurus (Bovine)).